The primary structure comprises 941 residues: Isoleucine--tRNA ligase (941 aa).

A 'HIGH' region motif is present at residues Pro-59–His-69. L-isoleucyl-5'-AMP is bound at residue Glu-562. The 'KMSKS' region signature appears at Lys-603–Ser-607. An ATP-binding site is contributed by Lys-606. Positions 904, 907, 924, and 927 each coordinate Zn(2+).

The protein belongs to the class-I aminoacyl-tRNA synthetase family. IleS type 1 subfamily. In terms of assembly, monomer. The cofactor is Zn(2+).

It localises to the cytoplasm. It carries out the reaction tRNA(Ile) + L-isoleucine + ATP = L-isoleucyl-tRNA(Ile) + AMP + diphosphate. Its function is as follows. Catalyzes the attachment of isoleucine to tRNA(Ile). As IleRS can inadvertently accommodate and process structurally similar amino acids such as valine, to avoid such errors it has two additional distinct tRNA(Ile)-dependent editing activities. One activity is designated as 'pretransfer' editing and involves the hydrolysis of activated Val-AMP. The other activity is designated 'posttransfer' editing and involves deacylation of mischarged Val-tRNA(Ile). In Haemophilus influenzae (strain 86-028NP), this protein is Isoleucine--tRNA ligase.